The sequence spans 510 residues: MIWHVQNENFILDSTRIFMKAFHLLLFHGSFIFPECILIFGLILLLMIDSTSDQKDRPWFYFISSTSLVISITALLFRWREEPIISFSGNFQTNNFNEIFQFLILLCSTLCIPLSVEYIECTEMAITEFLLFVLTATLGGMFLCGANDLITIFVAPECFSLCSYLLSGYTKRDVRSNEATMKYLLMGGASSSILVHGFSWLYGSSGGEIELQEIVNGLINTQMYNSPGISIALIFITVGIGFKLSPAPFHQWTPDVYEGSPTPVVAFLSVTSKVAASASATRIFDIPFYFSSNEWHLLLEILAILSMILGNLIAITQTSMKRMLAYSSIGQIGYVIIGIIVGDSNDGYASMITYMLFYISMNLGTFACIVLFGLRTGTDNIRDYAGLYTKDPFLALSSALCLLSLGGLPPLAGFFGKLYLFWCGWQAGLYFLVSIGLLTSVVSIYYYLKIIKLLMTGRNQEITPYVRNYRRSPLRSNNSIELSMTVCVIASTIPGISMNPILAIAQDXLF.

The next 12 helical transmembrane spans lie at 24–44 (LLLFHGSFIFPECILIFGLIL), 59–79 (WFYFISSTSLVISITALLFRW), 99–119 (IFQFLILLCSTLCIPLSVEYI), 124–144 (MAITEFLLFVLTATLGGMFLC), 149–169 (LITIFVAPECFSLCSYLLSGY), 183–203 (YLLMGGASSSILVHGFSWLYG), 229–249 (ISIALIFITVGIGFKLSPAPF), 295–315 (WHLLLEILAILSMILGNLIAI), 323–343 (MLAYSSIGQIGYVIIGIIVGD), 354–374 (YMLFYISMNLGTFACIVLFGL), 395–415 (ALSSALCLLSLGGLPPLAGFF), and 418–438 (LYLFWCGWQAGLYFLVSIGLL).

Belongs to the complex I subunit 2 family. As to quaternary structure, NDH is composed of at least 16 different subunits, 5 of which are encoded in the nucleus.

The protein localises to the plastid. It is found in the chloroplast thylakoid membrane. It carries out the reaction a plastoquinone + NADH + (n+1) H(+)(in) = a plastoquinol + NAD(+) + n H(+)(out). The enzyme catalyses a plastoquinone + NADPH + (n+1) H(+)(in) = a plastoquinol + NADP(+) + n H(+)(out). In terms of biological role, NDH shuttles electrons from NAD(P)H:plastoquinone, via FMN and iron-sulfur (Fe-S) centers, to quinones in the photosynthetic chain and possibly in a chloroplast respiratory chain. The immediate electron acceptor for the enzyme in this species is believed to be plastoquinone. Couples the redox reaction to proton translocation, and thus conserves the redox energy in a proton gradient. In Ananas comosus (Pineapple), this protein is NAD(P)H-quinone oxidoreductase subunit 2, chloroplastic.